The following is a 468-amino-acid chain: Mannan endo-1,4-beta-mannosidase 3 (468 aa).

Residues 1-23 (MTVRPRPAAAAIIIAAVFGAAAA) form the signal peptide. Position 86 (Trp-86) interacts with substrate. Asn-152 carries an N-linked (GlcNAc...) asparagine glycan. Residue Asn-201 coordinates substrate. Glu-202 functions as the Proton donor in the catalytic mechanism. A substrate-binding site is contributed by Tyr-281. An N-linked (GlcNAc...) asparagine glycan is attached at Asn-300. Residue Glu-321 is the Nucleophile of the active site. An N-linked (GlcNAc...) asparagine glycan is attached at Asn-333. Substrate is bound by residues Trp-364 and Asp-371. Residues 415–436 (LRRRRRRPASSHRKTRLGSGGD) form a disordered region. Basic residues predominate over residues 416-430 (RRRRRRPASSHRKTR).

The protein belongs to the glycosyl hydrolase 5 (cellulase A) family. In terms of tissue distribution, expressed in seeds.

It localises to the secreted. The catalysed reaction is Random hydrolysis of (1-&gt;4)-beta-D-mannosidic linkages in mannans, galactomannans and glucomannans.. In Oryza sativa subsp. japonica (Rice), this protein is Mannan endo-1,4-beta-mannosidase 3 (MAN3).